Here is a 502-residue protein sequence, read N- to C-terminus: Glycerol kinase (502 aa).

ADP is bound at residue Thr-13. Positions 13, 14, and 15 each coordinate ATP. Thr-13 contributes to the sn-glycerol 3-phosphate binding site. Arg-17 serves as a coordination point for ADP. Sn-glycerol 3-phosphate contacts are provided by Arg-83, Glu-84, Tyr-136, and Asp-246. Arg-83, Glu-84, Tyr-136, Asp-246, and Gln-247 together coordinate glycerol. ADP-binding residues include Thr-268 and Gly-311. Residues Thr-268, Gly-311, Gln-315, and Gly-412 each contribute to the ATP site. ADP contacts are provided by Gly-412 and Asn-416.

This sequence belongs to the FGGY kinase family.

The enzyme catalyses glycerol + ATP = sn-glycerol 3-phosphate + ADP + H(+). It participates in polyol metabolism; glycerol degradation via glycerol kinase pathway; sn-glycerol 3-phosphate from glycerol: step 1/1. Its activity is regulated as follows. Inhibited by fructose 1,6-bisphosphate (FBP). Functionally, key enzyme in the regulation of glycerol uptake and metabolism. Catalyzes the phosphorylation of glycerol to yield sn-glycerol 3-phosphate. The protein is Glycerol kinase of Francisella tularensis subsp. tularensis (strain WY96-3418).